We begin with the raw amino-acid sequence, 146 residues long: Thyroid hormone-inducible hepatic protein (146 aa).

Residues 83-104 (KVAGSEENGTAETEEVEDESAS) form a disordered region. A compositionally biased stretch (acidic residues) spans 94–104 (ETEEVEDESAS).

It belongs to the SPOT14 family. Homodimer. Heterodimer with MID1IP1. Interacts with THRB and PLAGL1. In terms of tissue distribution, mainly expressed in tissues that synthesize triglycerides.

It is found in the nucleus. It localises to the cytoplasm. Functionally, plays a role in the regulation of lipogenesis, especially in lactating mammary gland. Important for the biosynthesis of triglycerides with medium-length fatty acid chains. May modulate lipogenesis by interacting with MID1IP1 and preventing its interaction with ACACA. May function as transcriptional coactivator. May modulate the transcription factor activity of THRB. In Homo sapiens (Human), this protein is Thyroid hormone-inducible hepatic protein (THRSP).